The chain runs to 110 residues: Large ribosomal subunit protein uL22 (110 aa).

It belongs to the universal ribosomal protein uL22 family. Part of the 50S ribosomal subunit.

In terms of biological role, this protein binds specifically to 23S rRNA; its binding is stimulated by other ribosomal proteins, e.g. L4, L17, and L20. It is important during the early stages of 50S assembly. It makes multiple contacts with different domains of the 23S rRNA in the assembled 50S subunit and ribosome. The globular domain of the protein is located near the polypeptide exit tunnel on the outside of the subunit, while an extended beta-hairpin is found that lines the wall of the exit tunnel in the center of the 70S ribosome. The protein is Large ribosomal subunit protein uL22 of Campylobacter fetus subsp. fetus (strain 82-40).